We begin with the raw amino-acid sequence, 729 residues long: Fatty acid oxidation complex subunit alpha (729 aa).

The segment at 1–189 (MLYKGDTLYL…KIGLVDGVVK (189 aa)) is enoyl-CoA hydratase/isomerase. Position 296 (D296) interacts with substrate. The 3-hydroxyacyl-CoA dehydrogenase stretch occupies residues 311 to 729 (ETPKQAAVLG…ARPVGDLKTA (419 aa)). Residues M324, D343, 400–402 (VVE), K407, and S429 contribute to the NAD(+) site. H450 functions as the For 3-hydroxyacyl-CoA dehydrogenase activity in the catalytic mechanism. Residue N453 coordinates NAD(+). Substrate-binding residues include N500 and Y660. Residues 707–729 (ARHNEPYYPPVEPARPVGDLKTA) form a disordered region.

In the N-terminal section; belongs to the enoyl-CoA hydratase/isomerase family. The protein in the C-terminal section; belongs to the 3-hydroxyacyl-CoA dehydrogenase family. Heterotetramer of two alpha chains (FadB) and two beta chains (FadA).

It carries out the reaction a (3S)-3-hydroxyacyl-CoA + NAD(+) = a 3-oxoacyl-CoA + NADH + H(+). The enzyme catalyses a (3S)-3-hydroxyacyl-CoA = a (2E)-enoyl-CoA + H2O. The catalysed reaction is a 4-saturated-(3S)-3-hydroxyacyl-CoA = a (3E)-enoyl-CoA + H2O. It catalyses the reaction (3S)-3-hydroxybutanoyl-CoA = (3R)-3-hydroxybutanoyl-CoA. It carries out the reaction a (3Z)-enoyl-CoA = a 4-saturated (2E)-enoyl-CoA. The enzyme catalyses a (3E)-enoyl-CoA = a 4-saturated (2E)-enoyl-CoA. The protein operates within lipid metabolism; fatty acid beta-oxidation. Its function is as follows. Involved in the aerobic and anaerobic degradation of long-chain fatty acids via beta-oxidation cycle. Catalyzes the formation of 3-oxoacyl-CoA from enoyl-CoA via L-3-hydroxyacyl-CoA. It can also use D-3-hydroxyacyl-CoA and cis-3-enoyl-CoA as substrate. The sequence is that of Fatty acid oxidation complex subunit alpha from Escherichia coli O6:K15:H31 (strain 536 / UPEC).